Consider the following 326-residue polypeptide: Biotin synthase (326 aa).

Positions Asn47–Arg274 constitute a Radical SAM core domain. Residues Cys62, Cys66, and Cys69 each coordinate [4Fe-4S] cluster. [2Fe-2S] cluster-binding residues include Cys106, Cys137, Cys197, and Arg269.

This sequence belongs to the radical SAM superfamily. Biotin synthase family. Homodimer. Requires [4Fe-4S] cluster as cofactor. [2Fe-2S] cluster is required as a cofactor.

The catalysed reaction is (4R,5S)-dethiobiotin + (sulfur carrier)-SH + 2 reduced [2Fe-2S]-[ferredoxin] + 2 S-adenosyl-L-methionine = (sulfur carrier)-H + biotin + 2 5'-deoxyadenosine + 2 L-methionine + 2 oxidized [2Fe-2S]-[ferredoxin]. The protein operates within cofactor biosynthesis; biotin biosynthesis; biotin from 7,8-diaminononanoate: step 2/2. Catalyzes the conversion of dethiobiotin (DTB) to biotin by the insertion of a sulfur atom into dethiobiotin via a radical-based mechanism. This Methylococcus capsulatus (strain ATCC 33009 / NCIMB 11132 / Bath) protein is Biotin synthase.